The primary structure comprises 210 residues: Proline-rich protein 20G (210 aa).

The segment covering 1–11 has biased composition (basic residues); the sequence is MEEPRHSKRPR. The disordered stretch occupies residues 1–82; the sequence is MEEPRHSKRP…GGSWRAGRGR (82 aa). The span at 69–82 shows a compositional bias: gly residues; sequence GQRGGGSWRAGRGR.

This sequence belongs to the PRR20 family.

The polypeptide is Proline-rich protein 20G (Homo sapiens (Human)).